An 805-amino-acid chain; its full sequence is U-box domain-containing protein 32 (805 aa).

Disordered stretches follow at residues 181-205 (SNNRQTMPPLVQLDSDNETRKSEKL) and 226-284 (EKDT…EREG). Residues 226–239 (EKDTGQLEREKVEP) show a composition bias toward basic and acidic residues. Positions 245-257 (FSSGSSSSFGEPV) are enriched in low complexity. A coiled-coil region spans residues 331–434 (LEGLCIKESS…EVNALRRLVK (104 aa)). One can recognise a Protein kinase domain in the interval 460–718 (FDPSWKLGEG…FIDRMKAPEV (259 aa)). Residues 466–474 (LGEGKYGSV) and Lys-487 contribute to the ATP site. Residues 734-805 (RPPSHYLCPI…LAIQDWQNQW (72 aa)) form the U-box domain.

It belongs to the protein kinase superfamily. Ser/Thr protein kinase family.

The catalysed reaction is S-ubiquitinyl-[E2 ubiquitin-conjugating enzyme]-L-cysteine + [acceptor protein]-L-lysine = [E2 ubiquitin-conjugating enzyme]-L-cysteine + N(6)-ubiquitinyl-[acceptor protein]-L-lysine.. It participates in protein modification; protein ubiquitination. Its function is as follows. Functions as an E3 ubiquitin ligase. The chain is U-box domain-containing protein 32 (PUB32) from Arabidopsis thaliana (Mouse-ear cress).